The chain runs to 361 residues: Tyrosine--tRNA ligase (361 aa).

Positions 36, 162, 166, 169, and 184 each coordinate L-tyrosine. The 'KMSKS' region signature appears at 236–240 (KMSKS). An ATP-binding site is contributed by Lys239.

The protein belongs to the class-I aminoacyl-tRNA synthetase family. TyrS type 4 subfamily. In terms of assembly, homodimer.

It localises to the cytoplasm. The enzyme catalyses tRNA(Tyr) + L-tyrosine + ATP = L-tyrosyl-tRNA(Tyr) + AMP + diphosphate + H(+). Its function is as follows. Catalyzes the attachment of tyrosine to tRNA(Tyr) in a two-step reaction: tyrosine is first activated by ATP to form Tyr-AMP and then transferred to the acceptor end of tRNA(Tyr). The sequence is that of Tyrosine--tRNA ligase from Saccharolobus islandicus (strain Y.N.15.51 / Yellowstone #2) (Sulfolobus islandicus).